Here is a 132-residue protein sequence, read N- to C-terminus: MSLDVRVIAPNKVIWAKNAEEVILPSQSGMLGILTSHAPLYTALNTGVMKIRNETGWTSIVVMGGFVEVEKNEVLVLVNAGEYVDEIDLSAAKKDVEKALETFNSAEAPKEKEEAAEFLKYAQARLKAVVDK.

This sequence belongs to the ATPase epsilon chain family. F-type ATPases have 2 components, CF(1) - the catalytic core - and CF(0) - the membrane proton channel. CF(1) has five subunits: alpha(3), beta(3), gamma(1), delta(1), epsilon(1). CF(0) has three main subunits: a, b and c.

It localises to the plastid. It is found in the cyanelle thylakoid membrane. Functionally, produces ATP from ADP in the presence of a proton gradient across the membrane. This is ATP synthase epsilon chain, cyanelle from Cyanophora paradoxa.